A 323-amino-acid polypeptide reads, in one-letter code: tRNA U34 carboxymethyltransferase (323 aa).

Residues K91, W105, K110, G130, 152–154, 181–182, M196, Y200, and R315 contribute to the carboxy-S-adenosyl-L-methionine site; these read DPT and IE.

The protein belongs to the class I-like SAM-binding methyltransferase superfamily. CmoB family. As to quaternary structure, homotetramer.

It carries out the reaction carboxy-S-adenosyl-L-methionine + 5-hydroxyuridine(34) in tRNA = 5-carboxymethoxyuridine(34) in tRNA + S-adenosyl-L-homocysteine + H(+). In terms of biological role, catalyzes carboxymethyl transfer from carboxy-S-adenosyl-L-methionine (Cx-SAM) to 5-hydroxyuridine (ho5U) to form 5-carboxymethoxyuridine (cmo5U) at position 34 in tRNAs. The sequence is that of tRNA U34 carboxymethyltransferase from Escherichia coli (strain SE11).